Reading from the N-terminus, the 152-residue chain is uncharacterized protein (152 aa).

It is found in the mitochondrion. This is an uncharacterized protein from Arabidopsis thaliana (Mouse-ear cress).